The primary structure comprises 320 residues: Cyclin-D6-1 (320 aa).

The tract at residues 279–320 (HHRSASSESERTTTVGSAANSADAKRRCMGPPRQWGVGGPDE) is disordered.

The protein belongs to the cyclin family. Cyclin D subfamily.

In Oryza sativa subsp. japonica (Rice), this protein is Cyclin-D6-1 (CYCD6-1).